We begin with the raw amino-acid sequence, 661 residues long: Solute carrier organic anion transporter family member 1A4 (661 aa).

Topologically, residues 1–20 (MGKSEKRVATHGVRCFAKIK) are cytoplasmic. The helical transmembrane segment at 21–40 (MFLLALTCAYVSKSLSGTYM) threads the bilayer. Residues 41-59 (NSMLTQIERQFGIPTSIVG) lie on the Extracellular side of the membrane. A helical membrane pass occupies residues 60–80 (LINGSFEIGNLLLIIFVSYFG). The Cytoplasmic portion of the chain corresponds to 81-86 (TKLHRP). A helical membrane pass occupies residues 87 to 111 (IMIGVGCAVMGLGCFLISLPHFLMG). Over 112 to 154 (QYEYETILPTSNVSSNSFFCVENRSQTLNPTQDPSECVKEMKS) the chain is Extracellular. Asn-123 and Asn-134 each carry an N-linked (GlcNAc...) asparagine glycan. A helical membrane pass occupies residues 155–183 (LMWIYVLVGNIIRGIGETPIMPLGISYIE). Residues 184 to 202 (DFAKSENSPLYIGILETGM) lie on the Cytoplasmic side of the membrane. A helical membrane pass occupies residues 203–223 (TIGPLIGLLLASSCANIYVDI). At 224–241 (ESVNTDDLTITPTDTRWV) the chain is on the extracellular side. The chain crosses the membrane as a helical span at residues 242 to 266 (GAWWIGFLVCAGVNILTSFPFFFFP). Topologically, residues 267 to 310 (KTLPKEGLQENVDGTENAKEKKHRKKAKEEKRGITKDFFVFMKS) are cytoplasmic. A helical transmembrane segment spans residues 311–332 (LSCNPIYMLFILISVLQFNAFI). The Extracellular portion of the chain corresponds to 333 to 352 (NSFTFMPKYLEQQYGKSTAE). A helical membrane pass occupies residues 353-376 (VVFLMGLYMLPPICLGYLIGGLIM). The Cytoplasmic segment spans residues 377 to 380 (KKFK). A helical membrane pass occupies residues 381 to 404 (VTVKKAAHLAFWLCLSEYLLSFLS). Residues 405–512 (YVMTCDNFPV…PDCANKLQYF (108 aa)) lie on the Extracellular side of the membrane. The Kazal-like domain maps to 432-487 (NKVLADCNTRCNCSTNTWDPVCGDNGLAYMSACLAGCEKSVGTGTNMVFQNCSCIQ). 3 cysteine pairs are disulfide-bonded: Cys-438/Cys-468, Cys-444/Cys-464, and Cys-453/Cys-485. Asn-443 carries N-linked (GlcNAc...) asparagine glycosylation. Residues Asn-482 and Asn-491 are each glycosylated (N-linked (GlcNAc...) asparagine). A helical membrane pass occupies residues 513 to 535 (LIIAIFGCFIYSLAGIPGYMVLL). Over 536 to 544 (RCIKSEEKS) the chain is Cytoplasmic. Residues 545 to 570 (LGVGLHAFCIRILAGIPAPIYFGALI) traverse the membrane as a helical segment. The Extracellular segment spans residues 571–604 (DRTCLHWGTLKCGEPGACRMYDINSFRRLYLGLP). The helical transmembrane segment at 605-622 (AALRGASFVPAFFILRLT) threads the bilayer. Topologically, residues 623 to 661 (RTFQFPGDIESSKTDHAEMKLTLKESECTEVLRSKVTED) are cytoplasmic. Phosphoserine occurs at positions 633 and 634.

It belongs to the organo anion transporter (TC 2.A.60) family. As to expression, highly expressed in brain, liver, and kidney but not expressed in heart, spleen, lung, skeletal muscle, and testis.

It is found in the cell membrane. It catalyses the reaction estrone 3-sulfate(out) = estrone 3-sulfate(in). The catalysed reaction is taurocholate(out) = taurocholate(in). The enzyme catalyses prostaglandin E2(out) = prostaglandin E2(in). It carries out the reaction L-thyroxine(out) = L-thyroxine(in). Functionally, mediates the Na(+)-independent transport of organic anions such as taurocholate, cholate, 17-beta-glucuronosyl estradiol, prostaglandin E2, estrone 3-sulfate, L-thyroxine (T4), the cardiac glycosides ouabain and digoxin and thyroid hormones. May play an especially important role in the brain accumulation and toxicity of digoxin and in the hepatobiliary and renal excretion of cardiac glycosides. Shows a pH-sensitive substrate specificity which may be ascribed to the protonation state of the binding site and leads to a stimulation of substrate transport in an acidic microenvironment. Hydrogencarbonate/HCO3(-) acts as the probable counteranion that exchanges for organic anions. The polypeptide is Solute carrier organic anion transporter family member 1A4 (Slco1a4) (Rattus norvegicus (Rat)).